Here is a 385-residue protein sequence, read N- to C-terminus: Chaperone protein DnaJ (385 aa).

Residues 5–70 enclose the J domain; that stretch reads DFYEVLGVSR…QKKAAYDQYG (66 aa). The segment at 137–214 adopts a CR-type zinc-finger fold; it reads GVSKEIEVPT…CHGQGRKQKT (78 aa). Cys150, Cys153, Cys167, Cys170, Cys189, Cys192, Cys202, and Cys205 together coordinate Zn(2+). CXXCXGXG motif repeat units follow at residues 150–157, 167–174, 189–196, and 202–209; these read CDTCDGSG, CGTCHGHG, CPTCHGKG, and CNECHGQG.

It belongs to the DnaJ family. As to quaternary structure, homodimer. Zn(2+) serves as cofactor.

The protein resides in the cytoplasm. Its function is as follows. Participates actively in the response to hyperosmotic and heat shock by preventing the aggregation of stress-denatured proteins and by disaggregating proteins, also in an autonomous, DnaK-independent fashion. Unfolded proteins bind initially to DnaJ; upon interaction with the DnaJ-bound protein, DnaK hydrolyzes its bound ATP, resulting in the formation of a stable complex. GrpE releases ADP from DnaK; ATP binding to DnaK triggers the release of the substrate protein, thus completing the reaction cycle. Several rounds of ATP-dependent interactions between DnaJ, DnaK and GrpE are required for fully efficient folding. Also involved, together with DnaK and GrpE, in the DNA replication of plasmids through activation of initiation proteins. This chain is Chaperone protein DnaJ, found in Vibrio harveyi (Beneckea harveyi).